The sequence spans 227 residues: uncharacterized protein (227 aa).

The N-terminal stretch at 1–25 (MLIMKKLLLIAATSATMLSSSVSFA) is a signal peptide.

It to R.conorii RC1281.

This is an uncharacterized protein from Rickettsia conorii (strain ATCC VR-613 / Malish 7).